The primary structure comprises 283 residues: Nopaline-binding periplasmic protein (283 aa).

The signal sequence occupies residues M1–A25. An intrachain disulfide couples C63 to C70.

It belongs to the bacterial solute-binding protein 3 family.

The protein localises to the periplasm. Functionally, component of the nopaline active transport system probably consisting of four subunits: Q, M, P and T. This system is also capable of transporting octopine provided that catabolic functions are induced with nopaline. This is Nopaline-binding periplasmic protein (nocT) from Agrobacterium fabrum (strain C58 / ATCC 33970) (Agrobacterium tumefaciens (strain C58)).